A 62-amino-acid polypeptide reads, in one-letter code: Small, acid-soluble spore protein H 1 (62 aa).

The protein belongs to the SspH family.

It localises to the spore core. This is Small, acid-soluble spore protein H 1 from Clostridium botulinum (strain ATCC 19397 / Type A).